A 367-amino-acid polypeptide reads, in one-letter code: Protein trichome birefringence-like 39 (367 aa).

The chain crosses the membrane as a helical; Signal-anchor for type II membrane protein span at residues 7-29; that stretch reads GNPSFLFFFFFFLCLSTVSAYIN. The GDS motif signature appears at 120 to 122; it reads GDS. Residues 343-357 carry the DCXHWCLPGXXDXWN motif motif; it reads DCSHWCLPGLPDTWN.

The protein belongs to the PC-esterase family. TBL subfamily.

It is found in the membrane. Functionally, may act as a bridging protein that binds pectin and other cell wall polysaccharides. Probably involved in maintaining esterification of pectins. May be involved in the specific O-acetylation of cell wall polymers. The chain is Protein trichome birefringence-like 39 (TBL39) from Arabidopsis thaliana (Mouse-ear cress).